The sequence spans 471 residues: Soluble pyridine nucleotide transhydrogenase (471 aa).

41–50 (EREPSVGGGC) contributes to the FAD binding site.

It belongs to the class-I pyridine nucleotide-disulfide oxidoreductase family. FAD serves as cofactor.

Its subcellular location is the cytoplasm. The catalysed reaction is NAD(+) + NADPH = NADH + NADP(+). Its function is as follows. Conversion of NADPH, generated by peripheral catabolic pathways, to NADH, which can enter the respiratory chain for energy generation. The protein is Soluble pyridine nucleotide transhydrogenase of Aliivibrio fischeri (strain ATCC 700601 / ES114) (Vibrio fischeri).